A 444-amino-acid polypeptide reads, in one-letter code: Exopolygalacturonase clone GBGA483 (444 aa).

Residues M1 to A23 form the signal peptide. 5 PbH1 repeats span residues C220–R246, S247–D268, T270–S290, V300–T321, and A330–Q351. An N-linked (GlcNAc...) asparagine glycan is attached at N222. The Proton donor role is filled by D261. A disulfide bond links C263 and C280. The active site involves H284. N-linked (GlcNAc...) asparagine glycosylation occurs at N342. 2 disulfides stabilise this stretch: C391-C397 and C420-C436.

It belongs to the glycosyl hydrolase 28 family.

Its subcellular location is the secreted. It is found in the cell wall. The enzyme catalyses [(1-&gt;4)-alpha-D-galacturonosyl](n) + H2O = alpha-D-galacturonate + [(1-&gt;4)-alpha-D-galacturonosyl](n-1). In terms of biological role, may function in depolymerizing pectin during pollen development, germination, and tube growth. Acts as an exo-polygalacturonase. This chain is Exopolygalacturonase clone GBGA483, found in Arabidopsis thaliana (Mouse-ear cress).